A 380-amino-acid polypeptide reads, in one-letter code: MASGSTASEEERSLRECELYVQKHNIQALLKDSIVQLCTARPERPMAFLREYFERLEKEEAKQIQNLQKASARADSREDEISPPPPNPVVKGRRRRGAISAEVYTEEDAASYVRKVIPKDYKTMAALAKAIEKNVLFSHLDDNERSDIFDAMFPVSFIAGETVIQQGDEGDNFYVIDQGEMDVYVNNEWATSVGEGGSFGELALIYGTPRAATVKAKTNVKLWGNDRDSYRRILMGSTLRKRKMYEEFLSKVSILESLDKWERLTVADALEPVQFEDGQKIVVQGEPGDEFFIILEGSAAVLQRRSENEEFVEVGRLGPSDYFGEIALLMNRPRAATVVARGPLKCVKLDRPRFERVLGPCSDILKRNIQQYNSFVSLSV.

N-acetylmethionine is present on methionine 1. Alanine 2 carries the N-acetylalanine; in cAMP-dependent protein kinase type I-alpha regulatory subunit, N-terminally processed modification. The dimerization and phosphorylation stretch occupies residues 2–135; the sequence is ASGSTASEEE…ALAKAIEKNV (134 aa). Residues serine 3, serine 76, and serine 82 each carry the phosphoserine modification. Residues 64 to 96 are disordered; that stretch reads IQNLQKASARADSREDEISPPPPNPVVKGRRRR. The short motif at 95–99 is the Pseudophosphorylation motif element; it reads RRGAI. At serine 100 the chain carries Phosphoserine. 3',5'-cyclic AMP is bound by residues 136–253, glutamate 201, arginine 210, 254–380, glutamate 325, and arginine 334; these read LFSH…SKVS and ILES…SLSV. Residue serine 257 is modified to Phosphoserine.

It belongs to the cAMP-dependent kinase regulatory chain family. In terms of assembly, the inactive holoenzyme is composed of two regulatory chains and two catalytic chains. Activation by cAMP releases the two active catalytic monomers and the regulatory dimer. Interacts with PRKACA and PRKACB. PRKAR1A also interacts with RFC2; the complex may be involved in cell survival. Interacts with AKAP4. Interacts with RARA; the interaction occurs in the presence of cAMP or FSH and regulates RARA transcriptional activity. Interacts with the phosphorylated form of PJA2. Interacts with CBFA2T3. Interacts with PRKX; regulates this cAMP-dependent protein kinase. Interacts with smAKAP; this interaction may target PRKAR1A to the plasma membrane. Interacts with AICDA. The pseudophosphorylation site binds to the substrate-binding region of the catalytic chain, resulting in the inhibition of its activity. Four types of regulatory chains are found: I-alpha, I-beta, II-alpha, and II-beta. Their expression varies among tissues and is in some cases constitutive and in others inducible.

It localises to the cell membrane. Functionally, regulatory subunit of the cAMP-dependent protein kinases involved in cAMP signaling in cells. The protein is cAMP-dependent protein kinase type I-alpha regulatory subunit (PRKAR1A) of Sus scrofa (Pig).